Here is a 167-residue protein sequence, read N- to C-terminus: Signal peptidase complex catalytic subunit SEC11 (167 aa).

Residues 1 to 9 (MNLRFELQK) lie on the Cytoplasmic side of the membrane. Residues 10 to 30 (LLNVCFLFASAYMFWQGLAIA) traverse the membrane as a helical; Signal-anchor for type II membrane protein segment. The Lumenal portion of the chain corresponds to 31–167 (TNSASPIVVV…LGLSALLGGE (137 aa)). Residues Ser-44, His-83, and Asp-109 each act as charge relay system in the active site. Asn-121 carries an N-linked (GlcNAc...) asparagine glycan. The segment at 153-164 (ALLGMLGLSALL) is C-terminal short (CTS) helix.

This sequence belongs to the peptidase S26B family. As to quaternary structure, component of the signal peptidase complex (SPC) composed of a catalytic subunit SEC11 and three accessory subunits SPC1, SPC2 and SPC3. The complex induces a local thinning of the ER membrane which is used to measure the length of the signal peptide (SP) h-region of protein substrates. This ensures the selectivity of the complex towards h-regions shorter than 18-20 amino acids. SPC associates with the translocon complex.

The protein resides in the endoplasmic reticulum membrane. The catalysed reaction is Cleavage of hydrophobic, N-terminal signal or leader sequences from secreted and periplasmic proteins.. Functionally, catalytic component of the signal peptidase complex (SPC) which catalyzes the cleavage of N-terminal signal sequences from nascent proteins as they are translocated into the lumen of the endoplasmic reticulum. Specifically cleaves N-terminal signal peptides that contain a hydrophobic alpha-helix (h-region) shorter than 18-20 amino acids. The polypeptide is Signal peptidase complex catalytic subunit SEC11 (SEC11) (Saccharomyces cerevisiae (strain Lalvin QA23) (Baker's yeast)).